The primary structure comprises 336 residues: MRRELAIEFSRVTESAALAGYKWLGRGDKNTADGAAVNAMRIMLNQVNIDGTIVIGEGEIDEAPMLYIGEKVGTGRGDAVDIAVDPIEGTRMTAMGQANALAVLAVGDKGCFLNAPDMYMEKLIVGPGAKGTIDLNLPLADNLRNVAAALGKPLSELTVTILAKPRHDAVIAEMQQLGVRVFAIPDGDVAASILTCMPDSEVDVLYGIGGAPEGVVSAAVIRALDGDMNGRLLARHDVKGDNEENRRIGEQELARCKAMGIEAGKVLRLGDMARSDNVIFSATGITKGDLLEGISRKGNIATTETLLIRGKSRTIRRIQSIHYLDRKDPEMQVHIL.

Mn(2+) is bound by residues aspartate 33, glutamate 57, aspartate 85, and glutamate 88. Residues 88–90 (EGT), tyrosine 119, 164–166 (KPR), 186–188 (DGD), and glycine 210 each bind substrate. Glutamate 213 is a binding site for Mn(2+).

It belongs to the FBPase class 2 family. In terms of assembly, homodimer. Mn(2+) serves as cofactor.

It is found in the cytoplasm. It carries out the reaction beta-D-fructose 1,6-bisphosphate + H2O = beta-D-fructose 6-phosphate + phosphate. It functions in the pathway carbohydrate biosynthesis; gluconeogenesis. Catalyzes the hydrolysis of fructose 1,6-bisphosphate to fructose 6-phosphate. The protein is Fructose-1,6-bisphosphatase class 2 (glpX) of Shigella flexneri.